The chain runs to 580 residues: Adenine deaminase (580 aa).

It belongs to the metallo-dependent hydrolases superfamily. Adenine deaminase family. The cofactor is Mn(2+).

It carries out the reaction adenine + H2O + H(+) = hypoxanthine + NH4(+). This Listeria monocytogenes serovar 1/2a (strain ATCC BAA-679 / EGD-e) protein is Adenine deaminase.